The following is a 304-amino-acid chain: Cell surface-binding protein OPG105 (304 aa).

Residues Met1–Gly235 form the Alpha-carbonic anhydrase domain. At Met1–Thr275 the chain is on the virion surface side. Residues Phe276–Met294 traverse the membrane as a helical segment. The Intravirion portion of the chain corresponds to Ser295 to Asn304.

This sequence belongs to the alpha-carbonic anhydrase family. Homodimer; disulfide-linked. In terms of processing, apparently non-glycosylated.

Its subcellular location is the virion membrane. Its function is as follows. Binds to chondroitin sulfate on the cell surface to provide virion attachment to target cell. The protein is Cell surface-binding protein OPG105 (OPG105) of Bos taurus (Bovine).